The chain runs to 404 residues: Transcription factor sem-2 (404 aa).

The HMG box DNA-binding region spans 93 to 161 (IKRPMNAFMV…CHMQEYPDYK (69 aa)). 2 disordered regions span residues 158–218 (PDYK…QFQN) and 321–359 (HTSP…NSAG). Residues 177–199 (QQPAQPQAPQQQQAPPRGASPQA) are compositionally biased toward low complexity. 2 stretches are compositionally biased toward polar residues: residues 207-218 (TDQQSETQQFQN) and 347-359 (ASEQ…NSAG).

The protein localises to the nucleus. Probable transcription factor required for embryogenesis, vulval development and cell fate specification of the postembryonic mesoderm (also known as the M lineage). Specifically, required for the specification of sex myoblast cells and their development into the muscles that are necessary for egg-laying. In addition, may be involved in RME GABAergic motor neuron progenitor cell fate specification. This chain is Transcription factor sem-2, found in Caenorhabditis elegans.